The sequence spans 381 residues: Diguanylate cyclase DosC (381 aa).

Heme is bound at residue His98. One can recognise a GGDEF domain in the interval 325–381; sequence TPLSVLIIDVDKFKEINDTWGHNTGDEILRKVSFLSQKRLVKSKILGAGSSRKLAVS. A Mg(2+)-binding site is contributed by Asp333. Substrate contacts are provided by Asn341 and Asp350.

The cofactor is heme. Mg(2+) serves as cofactor.

It catalyses the reaction 2 GTP = 3',3'-c-di-GMP + 2 diphosphate. Its pathway is purine metabolism; 3',5'-cyclic di-GMP biosynthesis. Its function is as follows. Globin-coupled heme-based oxygen sensor protein displaying diguanylate cyclase (DGC) activity in response to oxygen availability. Thus, catalyzes the synthesis of cyclic diguanylate (c-di-GMP) via the condensation of 2 GTP molecules. Cyclic-di-GMP is a second messenger which controls cell surface-associated traits in bacteria. The protein is Diguanylate cyclase DosC (dosC) of Shigella flexneri.